The chain runs to 595 residues: Solute carrier family 13 member 1 (595 aa).

A run of 5 helical transmembrane segments spans residues phenylalanine 13–lysine 33, isoleucine 40–leucine 60, valine 77–threonine 97, valine 113–phenylalanine 133, and leucine 134–valine 154. The N-linked (GlcNAc...) asparagine glycan is linked to asparagine 174. Residues glutamine 190 to threonine 218 form a disordered region. The segment covering aspartate 208–threonine 218 has biased composition (basic and acidic residues). 8 consecutive transmembrane segments (helical) span residues leucine 239 to threonine 259, serine 283 to leucine 303, isoleucine 348 to phenylalanine 368, glycine 381 to alanine 401, proline 464 to leucine 484, proline 491 to asparagine 511, proline 512 to alanine 532, and alanine 553 to isoleucine 573. Asparagine 591 carries an N-linked (GlcNAc...) asparagine glycan.

The protein belongs to the SLC13A/DASS transporter (TC 2.A.47) family. NADC subfamily. In terms of tissue distribution, kidney and intestine.

The protein localises to the apical cell membrane. It catalyses the reaction sulfate(out) + 3 Na(+)(out) = sulfate(in) + 3 Na(+)(in). It carries out the reaction selenate(out) + 3 Na(+)(out) = selenate(in) + 3 Na(+)(in). The enzyme catalyses thiosulfate(out) + 3 Na(+)(out) = thiosulfate(in) + 3 Na(+)(in). In terms of biological role, sodium:sulfate symporter that mediates sulfate reabsorption in the kidney and small intestine. Can also mediate the transport of selenate and thiosulfate. The polypeptide is Solute carrier family 13 member 1 (Slc13a1) (Rattus norvegicus (Rat)).